The primary structure comprises 380 residues: GDSL esterase/lipase At3g26430 (380 aa).

A signal peptide spans 1–25; that stretch reads METNLLLVKCVLLASCLIHPRACSP. Ser-38 (nucleophile) is an active-site residue. 3 N-linked (GlcNAc...) asparagine glycosylation sites follow: Asn-97, Asn-115, and Asn-183. Residues Asp-346 and His-349 contribute to the active site.

This sequence belongs to the 'GDSL' lipolytic enzyme family.

Its subcellular location is the secreted. The enzyme catalyses hexadecanoate ester + H2O = an aliphatic alcohol + hexadecanoate + H(+). It catalyses the reaction a butanoate ester + H2O = an aliphatic alcohol + butanoate + H(+). Lipase activity is inhibited by phenylmethylsulfonyl fluoride (PMSF), but not neostigmine bromide (NB). Its function is as follows. Lipase that can hydrolyze p-nitrophenyl butyrate and p-nitrophenyl palmitate in vitro. Possesses low activity against p-nitrophenyl acetate. Substrate preference is p-nitrophenyl palmitate &gt; p-nitrophenyl butyrate &gt;&gt; p-nitrophenyl acetate. Lacks cholinesterase activity. This Arabidopsis thaliana (Mouse-ear cress) protein is GDSL esterase/lipase At3g26430.